The primary structure comprises 159 residues: Putative ribosomal RNA large subunit methyltransferase H (159 aa).

S-adenosyl-L-methionine-binding positions include leucine 76, glycine 108, and 127-132 (LSPLTF).

Belongs to the RNA methyltransferase RlmH family.

It localises to the cytoplasm. The catalysed reaction is pseudouridine(1915) in 23S rRNA + S-adenosyl-L-methionine = N(3)-methylpseudouridine(1915) in 23S rRNA + S-adenosyl-L-homocysteine + H(+). In terms of biological role, specifically methylates the pseudouridine at position 1915 (m3Psi1915) in 23S rRNA. The protein is Putative ribosomal RNA large subunit methyltransferase H of Methanoregula boonei (strain DSM 21154 / JCM 14090 / 6A8).